The following is an 89-amino-acid chain: Small ribosomal subunit protein uS15 (89 aa).

It belongs to the universal ribosomal protein uS15 family. As to quaternary structure, part of the 30S ribosomal subunit. Forms a bridge to the 50S subunit in the 70S ribosome, contacting the 23S rRNA.

Its function is as follows. One of the primary rRNA binding proteins, it binds directly to 16S rRNA where it helps nucleate assembly of the platform of the 30S subunit by binding and bridging several RNA helices of the 16S rRNA. Forms an intersubunit bridge (bridge B4) with the 23S rRNA of the 50S subunit in the ribosome. The chain is Small ribosomal subunit protein uS15 from Streptococcus uberis (strain ATCC BAA-854 / 0140J).